Here is a 158-residue protein sequence, read N- to C-terminus: Transcriptional regulator MraZ (158 aa).

SpoVT-AbrB domains are found at residues 7 to 66 (KEQH…EPSV) and 95 to 138 (LDCV…APEK).

This sequence belongs to the MraZ family. In terms of assembly, forms oligomers.

The protein resides in the cytoplasm. Its subcellular location is the nucleoid. This is Transcriptional regulator MraZ from Prosthecochloris aestuarii (strain DSM 271 / SK 413).